Consider the following 156-residue polypeptide: Peptide methionine sulfoxide reductase MsrA (156 aa).

The active site involves Cys-10.

It belongs to the MsrA Met sulfoxide reductase family.

The catalysed reaction is L-methionyl-[protein] + [thioredoxin]-disulfide + H2O = L-methionyl-(S)-S-oxide-[protein] + [thioredoxin]-dithiol. It carries out the reaction [thioredoxin]-disulfide + L-methionine + H2O = L-methionine (S)-S-oxide + [thioredoxin]-dithiol. Its function is as follows. Has an important function as a repair enzyme for proteins that have been inactivated by oxidation. Catalyzes the reversible oxidation-reduction of methionine sulfoxide in proteins to methionine. The sequence is that of Peptide methionine sulfoxide reductase MsrA from Acidobacterium capsulatum (strain ATCC 51196 / DSM 11244 / BCRC 80197 / JCM 7670 / NBRC 15755 / NCIMB 13165 / 161).